We begin with the raw amino-acid sequence, 244 residues long: Agamous-like MADS-box protein MADS3 (244 aa).

Positions 1 to 61 constitute an MADS-box domain; sequence MGRGRVELKR…GKLYEFGSAG (61 aa). The K-box domain occupies 85–175; that stretch reads TQSWYQEVSK…KLKLEAEGQS (91 aa). The tract at residues 180–206 is disordered; it reads QGSWNPSTATAGNSSFPVHPSQSNPMD. Residues 181-204 show a composition bias toward polar residues; sequence GSWNPSTATAGNSSFPVHPSQSNP.

In terms of tissue distribution, expressed in flowers and seeds.

It localises to the nucleus. Probable transcription factor involved in flower development. This Vitis vinifera (Grape) protein is Agamous-like MADS-box protein MADS3.